The chain runs to 200 residues: Small ribosomal subunit protein uS5 (200 aa).

The segment covering 1–12 (MGRPRTSQTRGQ) has biased composition (polar residues). Residues 1–49 (MGRPRTSQTRGQGPSGATGGNPRGGGSTTRERDARGARPGERDGGSEIQ) are disordered. Residues 13-27 (GPSGATGGNPRGGGS) are compositionally biased toward gly residues. Positions 29–49 (TRERDARGARPGERDGGSEIQ) are enriched in basic and acidic residues. Positions 48–111 (IQDRVVQIRR…EKARHAMFDV (64 aa)) constitute an S5 DRBM domain.

It belongs to the universal ribosomal protein uS5 family. Part of the 30S ribosomal subunit. Contacts proteins S4 and S8.

Its function is as follows. With S4 and S12 plays an important role in translational accuracy. Located at the back of the 30S subunit body where it stabilizes the conformation of the head with respect to the body. The chain is Small ribosomal subunit protein uS5 from Rubrobacter xylanophilus (strain DSM 9941 / JCM 11954 / NBRC 16129 / PRD-1).